The sequence spans 84 residues: UPF0410 protein YmgE (84 aa).

3 helical membrane passes run 1–21 (MGII…KLIM), 27–47 (GGFF…GWLA), and 58–78 (GFNL…LGVF).

The protein belongs to the UPF0410 family.

The protein localises to the cell inner membrane. This Escherichia coli O127:H6 (strain E2348/69 / EPEC) protein is UPF0410 protein YmgE (ymgE).